The primary structure comprises 1270 residues: DNA-directed RNA polymerase subunit beta (1270 aa).

The protein belongs to the RNA polymerase beta chain family. In terms of assembly, the RNAP catalytic core consists of 2 alpha, 1 beta, 1 beta' and 1 omega subunit. When a sigma factor is associated with the core the holoenzyme is formed, which can initiate transcription.

It carries out the reaction RNA(n) + a ribonucleoside 5'-triphosphate = RNA(n+1) + diphosphate. In terms of biological role, DNA-dependent RNA polymerase catalyzes the transcription of DNA into RNA using the four ribonucleoside triphosphates as substrates. The chain is DNA-directed RNA polymerase subunit beta from Porphyromonas cangingivalis.